A 395-amino-acid chain; its full sequence is Elongation factor Tu (395 aa).

Residues Lys-10–Glu-205 form the tr-type G domain. Residues Gly-19–Thr-26 are G1. Gly-19 to Thr-26 is a GTP binding site. Residue Thr-26 coordinates Mg(2+). Positions Gly-61–Ala-65 are G2. The interval Asp-82–Gly-85 is G3. Residues Asp-82–His-86 and Asn-137–Asp-140 contribute to the GTP site. The tract at residues Asn-137 to Asp-140 is G4. The segment at Ser-175–Leu-177 is G5.

Belongs to the TRAFAC class translation factor GTPase superfamily. Classic translation factor GTPase family. EF-Tu/EF-1A subfamily. Monomer.

It is found in the cytoplasm. It carries out the reaction GTP + H2O = GDP + phosphate + H(+). Its function is as follows. GTP hydrolase that promotes the GTP-dependent binding of aminoacyl-tRNA to the A-site of ribosomes during protein biosynthesis. The polypeptide is Elongation factor Tu (Solibacter usitatus (strain Ellin6076)).